A 446-amino-acid polypeptide reads, in one-letter code: MSCLMVERCGEVLFESPEQSVKCVCMLGDVRLRGQTGVPAERRGSYPFIDFRLLNNTTHSGEIGTKKKVKRLLSFQRYFHASRLLRGIIPQAPLHLLDEDYLGQARHMLSKVGTWDFDIFLFDRLTNGNSLVTLLCHLFNSHGLIHHFKLDMVTLHRFLVMVQEDYHGHNPYHNAVHAADVTQAMHCYLKEPKLASFLTPLDIMLGLLAAAAHDVDHPGVNQPFLIKTNHHLANLYQNMSVLENHHWRSTIGMLRESRLLAHLPKEMTQDIEQQLGSLILATDINRQNEFLTRLKAHLHNKDLRLENVQDRHFMLQIALKCADICNPCRIWEMSKQWSERVCEEFYRQGDLEQKFELEISPLCNQQKDSIPSIQIGFMTYIVEPLFREWARFTGNSTLSENMLSHLAHNKAQWKSLLSNQHRRRGSGQDLAGPAPETLEQTEGATP.

One can recognise a PDEase domain in the interval 97-420 (LDEDYLGQAR…AQWKSLLSNQ (324 aa)). The active-site Proton donor is His-173. The a divalent metal cation site is built by His-177, His-213, Asp-214, and Asp-323. Positions 422 to 446 (RRRGSGQDLAGPAPETLEQTEGATP) are disordered. Position 426 is a phosphoserine (Ser-426). Thr-445 bears the Phosphothreonine mark.

Belongs to the cyclic nucleotide phosphodiesterase family. PDE7 subfamily. A divalent metal cation serves as cofactor. Highly expressed in brain.

It catalyses the reaction 3',5'-cyclic AMP + H2O = AMP + H(+). It functions in the pathway purine metabolism; 3',5'-cyclic AMP degradation; AMP from 3',5'-cyclic AMP: step 1/1. Inhibited by dipyridamole, IBMX and SCH 51866. Insensitive to zaprinast, rolipram, and milrinone. Functionally, hydrolyzes the second messenger cAMP, which is a key regulator of many important physiological processes. May be involved in the control of cAMP-mediated neural activity and cAMP metabolism in the brain. The protein is 3',5'-cyclic-AMP phosphodiesterase 7B of Mus musculus (Mouse).